Reading from the N-terminus, the 434-residue chain is UDP-N-acetylglucosamine 1-carboxyvinyltransferase (434 aa).

Lysine 22–asparagine 23 provides a ligand contact to phosphoenolpyruvate. Residue arginine 99 coordinates UDP-N-acetyl-alpha-D-glucosamine. Cysteine 123 (proton donor) is an active-site residue. Cysteine 123 carries the post-translational modification 2-(S-cysteinyl)pyruvic acid O-phosphothioketal. UDP-N-acetyl-alpha-D-glucosamine-binding positions include arginine 128–glutamine 132, aspartate 317, and isoleucine 339.

The protein belongs to the EPSP synthase family. MurA subfamily.

The protein localises to the cytoplasm. The enzyme catalyses phosphoenolpyruvate + UDP-N-acetyl-alpha-D-glucosamine = UDP-N-acetyl-3-O-(1-carboxyvinyl)-alpha-D-glucosamine + phosphate. It participates in cell wall biogenesis; peptidoglycan biosynthesis. In terms of biological role, cell wall formation. Adds enolpyruvyl to UDP-N-acetylglucosamine. The polypeptide is UDP-N-acetylglucosamine 1-carboxyvinyltransferase (Paracidovorax citrulli (strain AAC00-1) (Acidovorax citrulli)).